The sequence spans 321 residues: D-alanine--D-alanine ligase (321 aa).

The ATP-grasp domain maps to 121 to 315 (RSWFLTNNIN…FVNLIEEILK (195 aa)). 148–199 (IKRPYVIKPFTQGSSIGVEVIFEEDDFNFANYDFPYGDEVIIEKYIKGRELQ) contributes to the ATP binding site. The Mg(2+) site is built by Glu-268, Glu-282, and Asn-284.

The protein belongs to the D-alanine--D-alanine ligase family. Mg(2+) serves as cofactor. Mn(2+) is required as a cofactor.

It is found in the cytoplasm. The catalysed reaction is 2 D-alanine + ATP = D-alanyl-D-alanine + ADP + phosphate + H(+). Its pathway is cell wall biogenesis; peptidoglycan biosynthesis. Its function is as follows. Cell wall formation. The chain is D-alanine--D-alanine ligase from Rickettsia bellii (strain RML369-C).